The following is a 500-amino-acid chain: Protein-cysteine N-palmitoyltransferase Rasp (500 aa).

10 helical membrane passes run 15–35 (IFVY…KIYG), 73–93 (GDFI…QGFI), 105–125 (FIGV…MVLL), 134–154 (IVSL…WILC), 206–226 (SLVQ…GPII), 243–263 (LGFV…QCAL), 293–313 (FMGQ…IAFA), 372–392 (LTFA…IWSI), 429–449 (LYAM…VYFI), and 461–481 (GAYL…YCFF). Histidine 381 is an active-site residue.

This sequence belongs to the membrane-bound acyltransferase family. HHAT subfamily.

Its subcellular location is the membrane. It carries out the reaction N-terminal L-cysteinyl-[protein] + hexadecanoyl-CoA = N-terminal N-hexadecanoyl-L-cysteinyl-[protein] + CoA + H(+). The enzyme catalyses N-terminal L-cysteinyl-[protein]-C-terminal glycyl cholesterol ester + hexadecanoyl-CoA = N-terminal N-hexadecanoyl-L-cysteinyl-[protein]-C-terminal glycyl cholesterol ester + CoA + H(+). Its function is as follows. Required in hedgehog (hh) expressing cells for production of appropriate signaling activity in embryos and in the imaginal precursors of adult tissues. Acts within the secretory pathway to catalyze N-terminal palmitoylation of Hh; this lipid modification is required for the embryonic and larval patterning activities of the Hh signal. Not required for Wg signaling. This is Protein-cysteine N-palmitoyltransferase Rasp (rasp) from Drosophila melanogaster (Fruit fly).